A 344-amino-acid polypeptide reads, in one-letter code: Lipase chaperone (344 aa).

The chain crosses the membrane as a helical span at residues Arg13–Gly35.

It belongs to the lipase chaperone family.

The protein resides in the cell inner membrane. May be involved in the folding of the extracellular lipase during its passage through the periplasm. The polypeptide is Lipase chaperone (Burkholderia vietnamiensis (strain G4 / LMG 22486) (Burkholderia cepacia (strain R1808))).